The following is a 483-amino-acid chain: Deoxyribodipyrimidine photo-lyase (483 aa).

Positions 2-136 (QKNLIWFRND…LVKGFHDNLL (135 aa)) constitute a Photolyase/cryptochrome alpha/beta domain. (6R)-5,10-methylene-5,6,7,8-tetrahydrofolate is bound by residues Asn-109 and Glu-110. Tyr-225 serves as a coordination point for FAD. A DNA-binding site is contributed by Arg-229. 237-241 (TSMLS) serves as a coordination point for FAD. Interaction with DNA regions lie at residues 278–285 (QILWREFY) and 345–346 (NR). 376 to 378 (DGD) is an FAD binding site. Gln-408 contributes to the DNA binding site.

The protein belongs to the DNA photolyase class-1 family. In terms of assembly, monomer. FAD serves as cofactor. The cofactor is (6R)-5,10-methylene-5,6,7,8-tetrahydrofolate.

It catalyses the reaction cyclobutadipyrimidine (in DNA) = 2 pyrimidine residues (in DNA).. Involved in repair of UV radiation-induced DNA damage. Catalyzes the light-dependent monomerization (300-600 nm) of cyclobutyl pyrimidine dimers (in cis-syn configuration), which are formed between adjacent bases on the same DNA strand upon exposure to ultraviolet radiation. This Buchnera aphidicola subsp. Acyrthosiphon pisum (strain APS) (Acyrthosiphon pisum symbiotic bacterium) protein is Deoxyribodipyrimidine photo-lyase (phrB).